A 263-amino-acid polypeptide reads, in one-letter code: Protein IQ-DOMAIN 9 (263 aa).

The interval 16–41 is disordered; sequence SKQGTEKKKTSAVKPKKGSKKKGTSL. A Nuclear localization signal 1 motif is present at residues 21–28; it reads EKKKTSAV. A compositionally biased stretch (basic residues) spans 25–38; sequence TSAVKPKKGSKKKG. The IQ domain occupies 46-75; that stretch reads EDWAATRIQTAFKAYKARKSLRRLKGIARA. A calmodulin-binding region spans residues 59 to 78; it reads AYKARKSLRRLKGIARAKLS. A Nuclear localization signal 2 motif is present at residues 107–114; sequence ARRVCMVT. Residues 216-263 form a disordered region; sequence TPKKPKSSKTDSNSPAKRTVSLSSVPAKTPFPGARNTVKPRRLSFPGA. A compositionally biased stretch (polar residues) spans 226–241; it reads DSNSPAKRTVSLSSVP.

Belongs to the IQD family. Binds to multiple calmodulin (CaM) in the presence of Ca(2+) and CaM-like proteins.

Its subcellular location is the nucleus. The protein localises to the nuclear body. In terms of biological role, may be involved in cooperative interactions with calmodulins or calmodulin-like proteins. Recruits calmodulin proteins to microtubules, thus being a potential scaffold in cellular signaling and trafficking. May associate with nucleic acids and regulate gene expression at the transcriptional or post-transcriptional level. The protein is Protein IQ-DOMAIN 9 of Arabidopsis thaliana (Mouse-ear cress).